We begin with the raw amino-acid sequence, 732 residues long: MDEAESFVPFQGIKKDVKGRLNCYKQDWISGLRAGFRILAPTTYIFFASAIPVITFGEQLERDTDGKITAVQTLVSTALCGVIHSIIGGQPLLILGVAEPTVIMYTFMFNFAKSRTDLGSNLFLAWTGWVCLWTGLLLFLLAVLGACTFINRFTRLAGELFGILIAMLFMQEAIRGIVDEFGVPGRTNPRSAEFQPAWVFANGMFGLVLSSGLLYTGLKSRKARSWRFGAEWLRGFIADYGVPVMVVVWTCISYIPWKSVPQGIPRRLVSPNPWSPGAYQNWTVIKEMVDVPVLYILLAVVPASMIAVLYYFDHSVASQLAQQEDFNLRKPPAYHYDLFLLGFLTILCGLIGIPPSNGVIPQSPMHTKSLATLNHQLLRNKLVAAARKCIRNNATIGEVYGSMEEAYQQMQSPLIHQEPSRIQGLKQSHIQKASNADALVDETVFDIETEVENILPVEVKEQRVSNFLQAMMVAGCVAAMPLIKRIPSSVLWGYFAYMAIESLPGNQFWERIVLLFTAPSRRFKVLEDNHAVFIETVPFKTMAMFTLFQTAYLLVCFGITWVPVAGVLFPLMIMFLVPVRQYVLPNFFKGAHLQDLDAAEYEEAPAILSFNLKPEGEVSRATSFADSGEVMDGMFTRSRGEIRKVSSLKLGGGGSGSTVGSPAGGGVELMRRVVSFQNPRVSEKVYIRSLSDFRGGGEISPRSSAGRAPFSPRSATGGGGGEQRLSNLGKSV.

Methionine 1 is subject to N-acetylmethionine. Topologically, residues 1–37 are cytoplasmic; that stretch reads MDEAESFVPFQGIKKDVKGRLNCYKQDWISGLRAGFR. The chain crosses the membrane as a helical span at residues 38 to 58; that stretch reads ILAPTTYIFFASAIPVITFGE. The Extracellular segment spans residues 59–77; that stretch reads QLERDTDGKITAVQTLVST. The chain crosses the membrane as a helical span at residues 78-98; sequence ALCGVIHSIIGGQPLLILGVA. Residues 99 to 123 lie on the Cytoplasmic side of the membrane; sequence EPTVIMYTFMFNFAKSRTDLGSNLF. A helical transmembrane segment spans residues 124-144; the sequence is LAWTGWVCLWTGLLLFLLAVL. Over 145–157 the chain is Extracellular; sequence GACTFINRFTRLA. A helical membrane pass occupies residues 158 to 178; sequence GELFGILIAMLFMQEAIRGIV. The Cytoplasmic segment spans residues 179–197; the sequence is DEFGVPGRTNPRSAEFQPA. A helical transmembrane segment spans residues 198-218; the sequence is WVFANGMFGLVLSSGLLYTGL. The Extracellular portion of the chain corresponds to 219–234; it reads KSRKARSWRFGAEWLR. Residues 235–255 traverse the membrane as a helical segment; sequence GFIADYGVPVMVVVWTCISYI. The Cytoplasmic segment spans residues 256 to 291; sequence PWKSVPQGIPRRLVSPNPWSPGAYQNWTVIKEMVDV. A helical membrane pass occupies residues 292-312; sequence PVLYILLAVVPASMIAVLYYF. Topologically, residues 313 to 339 are extracellular; sequence DHSVASQLAQQEDFNLRKPPAYHYDLF. The helical transmembrane segment at 340-360 threads the bilayer; that stretch reads LLGFLTILCGLIGIPPSNGVI. The Cytoplasmic portion of the chain corresponds to 361–463; it reads PQSPMHTKSL…ILPVEVKEQR (103 aa). The helical transmembrane segment at 464-484 threads the bilayer; it reads VSNFLQAMMVAGCVAAMPLIK. Topologically, residues 485-556 are extracellular; the sequence is RIPSSVLWGY…LFQTAYLLVC (72 aa). A helical membrane pass occupies residues 557–577; sequence FGITWVPVAGVLFPLMIMFLV. The Cytoplasmic segment spans residues 578–732; the sequence is PVRQYVLPNF…QRLSNLGKSV (155 aa). Positions 695–732 are disordered; sequence GGGEISPRSSAGRAPFSPRSATGGGGGEQRLSNLGKSV.

Belongs to the anion exchanger (TC 2.A.31.3) family.

Its subcellular location is the membrane. Its function is as follows. Probable boron transporter. Boron is essential for maintaining the integrity of plants cell walls. The polypeptide is Probable boron transporter 3 (BOR3) (Arabidopsis thaliana (Mouse-ear cress)).